Here is a 521-residue protein sequence, read N- to C-terminus: Protein YjiT (521 aa).

The protein is Protein YjiT (yjiT) of Escherichia coli (strain K12).